Here is a 207-residue protein sequence, read N- to C-terminus: FMN-dependent NADH:quinone oxidoreductase (207 aa).

Residues Ser-10, 16-18, 96-99, and 141-144 each bind FMN; these read SIS, MYNL, and SRGG.

This sequence belongs to the azoreductase type 1 family. As to quaternary structure, homodimer. Requires FMN as cofactor.

It catalyses the reaction 2 a quinone + NADH + H(+) = 2 a 1,4-benzosemiquinone + NAD(+). The catalysed reaction is N,N-dimethyl-1,4-phenylenediamine + anthranilate + 2 NAD(+) = 2-(4-dimethylaminophenyl)diazenylbenzoate + 2 NADH + 2 H(+). Functionally, quinone reductase that provides resistance to thiol-specific stress caused by electrophilic quinones. Its function is as follows. Also exhibits azoreductase activity. Catalyzes the reductive cleavage of the azo bond in aromatic azo compounds to the corresponding amines. The chain is FMN-dependent NADH:quinone oxidoreductase from Nostoc sp. (strain PCC 7120 / SAG 25.82 / UTEX 2576).